The primary structure comprises 524 residues: Cytochrome P450 704B1 (524 aa).

Residues 2-22 (SLCLVIACMVTSWIFLHRWGQ) traverse the membrane as a helical segment. C471 lines the heme pocket.

It belongs to the cytochrome P450 family. Requires heme as cofactor.

It is found in the membrane. The catalysed reaction is an omega-methyl-long-chain fatty acid + reduced [NADPH--hemoprotein reductase] + O2 = an omega-hydroxy-long-chain fatty acid + oxidized [NADPH--hemoprotein reductase] + H2O + H(+). Involved in pollen wall development. Catalyzes the conversion of long-chain fatty acids to the corresponding omega-hydroxylated fatty acids. Omega-hydroxylated fatty acids, together with in-chain hydroxylated fatty acids, are key monomeric aliphatic building blocks for sporopollenin synthesis during exine formation. The protein is Cytochrome P450 704B1 (CYP704B1) of Arabidopsis thaliana (Mouse-ear cress).